A 332-amino-acid polypeptide reads, in one-letter code: Anthranilate phosphoribosyltransferase (332 aa).

5-phospho-alpha-D-ribose 1-diphosphate is bound by residues Gly79, 82–83 (GD), Ser87, 89–92 (NIST), 107–115 (KHGNRSVSS), and Ser119. Anthranilate is bound at residue Gly79. Ser91 is a Mg(2+) binding site. Asn110 lines the anthranilate pocket. Position 165 (Arg165) interacts with anthranilate. Residues Asp223 and Glu224 each coordinate Mg(2+).

The protein belongs to the anthranilate phosphoribosyltransferase family. In terms of assembly, homodimer. Mg(2+) is required as a cofactor.

It catalyses the reaction N-(5-phospho-beta-D-ribosyl)anthranilate + diphosphate = 5-phospho-alpha-D-ribose 1-diphosphate + anthranilate. The protein operates within amino-acid biosynthesis; L-tryptophan biosynthesis; L-tryptophan from chorismate: step 2/5. Catalyzes the transfer of the phosphoribosyl group of 5-phosphorylribose-1-pyrophosphate (PRPP) to anthranilate to yield N-(5'-phosphoribosyl)-anthranilate (PRA). The chain is Anthranilate phosphoribosyltransferase from Serratia proteamaculans (strain 568).